Consider the following 352-residue polypeptide: S-adenosylmethionine:tRNA ribosyltransferase-isomerase (352 aa).

The protein belongs to the QueA family. In terms of assembly, monomer.

It is found in the cytoplasm. The enzyme catalyses 7-aminomethyl-7-carbaguanosine(34) in tRNA + S-adenosyl-L-methionine = epoxyqueuosine(34) in tRNA + adenine + L-methionine + 2 H(+). The protein operates within tRNA modification; tRNA-queuosine biosynthesis. Functionally, transfers and isomerizes the ribose moiety from AdoMet to the 7-aminomethyl group of 7-deazaguanine (preQ1-tRNA) to give epoxyqueuosine (oQ-tRNA). In Vibrio cholerae serotype O1 (strain ATCC 39541 / Classical Ogawa 395 / O395), this protein is S-adenosylmethionine:tRNA ribosyltransferase-isomerase.